Consider the following 235-residue polypeptide: 7-carboxy-7-deazaguanine synthase (235 aa).

Residues 27–29 (LQG) and R42 each bind substrate. A Radical SAM core domain is found at 33–235 (FSGQPSVFVR…VQVHKILKIA (203 aa)). C46, C50, and C53 together coordinate [4Fe-4S] cluster. Mg(2+) is bound at residue T55. T87 provides a ligand contact to substrate. S-adenosyl-L-methionine contacts are provided by residues G89 and 133 to 135 (SPK).

This sequence belongs to the radical SAM superfamily. 7-carboxy-7-deazaguanine synthase family. Homodimer. It depends on [4Fe-4S] cluster as a cofactor. Requires S-adenosyl-L-methionine as cofactor. The cofactor is Mg(2+).

The catalysed reaction is 6-carboxy-5,6,7,8-tetrahydropterin + H(+) = 7-carboxy-7-deazaguanine + NH4(+). Its pathway is purine metabolism; 7-cyano-7-deazaguanine biosynthesis. In terms of biological role, catalyzes the complex heterocyclic radical-mediated conversion of 6-carboxy-5,6,7,8-tetrahydropterin (CPH4) to 7-carboxy-7-deazaguanine (CDG), a step common to the biosynthetic pathways of all 7-deazapurine-containing compounds. This chain is 7-carboxy-7-deazaguanine synthase, found in Rhodospirillum rubrum (strain ATCC 11170 / ATH 1.1.1 / DSM 467 / LMG 4362 / NCIMB 8255 / S1).